Reading from the N-terminus, the 494-residue chain is Argininosuccinate lyase (494 aa).

It belongs to the lyase 1 family. Argininosuccinate lyase subfamily.

The protein localises to the cytoplasm. It catalyses the reaction 2-(N(omega)-L-arginino)succinate = fumarate + L-arginine. It functions in the pathway amino-acid biosynthesis; L-arginine biosynthesis; L-arginine from L-ornithine and carbamoyl phosphate: step 3/3. This is Argininosuccinate lyase from Methanosphaerula palustris (strain ATCC BAA-1556 / DSM 19958 / E1-9c).